A 386-amino-acid chain; its full sequence is S-adenosylmethionine synthase (386 aa).

H17 serves as a coordination point for ATP. Mg(2+) is bound at residue D19. E45 serves as a coordination point for K(+). Residues E58 and Q101 each contribute to the L-methionine site. A flexible loop region spans residues Q101–E111. ATP is bound by residues D168–K170, D242, R248–K249, A265, and K269. D242 provides a ligand contact to L-methionine. K273 provides a ligand contact to L-methionine.

The protein belongs to the AdoMet synthase family. In terms of assembly, homotetramer; dimer of dimers. Requires Mg(2+) as cofactor. K(+) is required as a cofactor.

The protein localises to the cytoplasm. It catalyses the reaction L-methionine + ATP + H2O = S-adenosyl-L-methionine + phosphate + diphosphate. It functions in the pathway amino-acid biosynthesis; S-adenosyl-L-methionine biosynthesis; S-adenosyl-L-methionine from L-methionine: step 1/1. Functionally, catalyzes the formation of S-adenosylmethionine (AdoMet) from methionine and ATP. The overall synthetic reaction is composed of two sequential steps, AdoMet formation and the subsequent tripolyphosphate hydrolysis which occurs prior to release of AdoMet from the enzyme. This is S-adenosylmethionine synthase from Leptospira borgpetersenii serovar Hardjo-bovis (strain JB197).